The following is a 626-amino-acid chain: Serine/threonine-protein kinase PknH (626 aa).

Residues 1–403 are Cytoplasmic-facing; it reads MSDAQDSRVG…QTPRKTNPWP (403 aa). The region spanning 16-276 is the Protein kinase domain; it reads YHLKRLLGRG…DLALAAHEAL (261 aa). Residues 22 to 30 and K45 each bind ATP; that span reads LGRGGMGEV. D139 (proton acceptor) is an active-site residue. T170 carries the post-translational modification Phosphothreonine. The disordered stretch occupies residues 292-396; that stretch reads QESTLPAPPK…GGPSPWAQTP (105 aa). Composition is skewed to pro residues over residues 297-308 and 316-342; these read PAPPKPVPPPTM and RQPP…PAQP. Low complexity predominate over residues 343 to 355; sequence GPAGQRPGPTGQP. A helical membrane pass occupies residues 404–424; sequence LVAGAAAVVLVLVLGAIGIWI. Residues 425–626 are Extracellular-facing; it reads AIRPKPVQPP…AKIVDKVNKE (202 aa). 2 cysteine pairs are disulfide-bonded: C482–C545 and C587–C604.

It belongs to the protein kinase superfamily. Ser/Thr protein kinase family. Requires a divalent metal cation as cofactor. Post-translationally, autophosphorylated on threonine and serine residues. Dephosphorylated by PstP.

Its subcellular location is the cell membrane. It catalyses the reaction L-seryl-[protein] + ATP = O-phospho-L-seryl-[protein] + ADP + H(+). The enzyme catalyses L-threonyl-[protein] + ATP = O-phospho-L-threonyl-[protein] + ADP + H(+). Its function is as follows. May regulate bacterial growth in response to external signals to facilitate adaptation to the host environment. This Mycobacterium tuberculosis (strain CDC 1551 / Oshkosh) protein is Serine/threonine-protein kinase PknH (pknH).